A 226-amino-acid polypeptide reads, in one-letter code: Ribonuclease 3 (226 aa).

An RNase III domain is found at 4–127 (LEEFEKKLGY…VMGAIYLEKG (124 aa)). Residue glutamate 40 coordinates Mg(2+). Residue aspartate 44 is part of the active site. Mg(2+)-binding residues include asparagine 113 and glutamate 116. Glutamate 116 is an active-site residue. Residues 154–223 (DFKTALQEFT…AKEALKILKA (70 aa)) enclose the DRBM domain.

Belongs to the ribonuclease III family. As to quaternary structure, homodimer. Mg(2+) is required as a cofactor.

It is found in the cytoplasm. It carries out the reaction Endonucleolytic cleavage to 5'-phosphomonoester.. Digests double-stranded RNA. Involved in the processing of primary rRNA transcript to yield the immediate precursors to the large and small rRNAs (23S and 16S). Processes some mRNAs, and tRNAs when they are encoded in the rRNA operon. Processes pre-crRNA and tracrRNA of type II CRISPR loci if present in the organism. This chain is Ribonuclease 3, found in Nitratiruptor sp. (strain SB155-2).